Reading from the N-terminus, the 520-residue chain is Probable cytochrome P450 6v1 (520 aa).

C465 lines the heme pocket.

It belongs to the cytochrome P450 family. Heme serves as cofactor.

Its subcellular location is the endoplasmic reticulum membrane. It is found in the microsome membrane. In terms of biological role, may be involved in the metabolism of insect hormones and in the breakdown of synthetic insecticides. This is Probable cytochrome P450 6v1 (Cyp6v1) from Drosophila melanogaster (Fruit fly).